We begin with the raw amino-acid sequence, 442 residues long: SPRY domain-containing protein 3 (442 aa).

Positions 17-204 (DLNLHYRFLN…VRLHLNAELG (188 aa)) constitute a B30.2/SPRY domain. Residues 371–394 (EGEEEEEEEEEEEDGEEIEPEHEG) are disordered. A compositionally biased stretch (acidic residues) spans 372-390 (GEEEEEEEEEEEDGEEIEP).

This is SPRY domain-containing protein 3 (SPRYD3) from Homo sapiens (Human).